The sequence spans 400 residues: Large envelope protein (400 aa).

Met-1 is modified (N-acetylmethionine). The N-myristoyl glycine; by host moiety is linked to residue Gly-2. The segment at 2 to 119 (GAPLSTARRG…PPLRDTHPQA (118 aa)) is pre-S1. The tract at residues 2–174 (GAPLSTARRG…FSKTGDPAMN (173 aa)) is pre-S. Residues 2–181 (GAPLSTARRG…AMNMENITSG (180 aa)) are Virion surface; in external conformation-facing. The Intravirion; in internal conformation portion of the chain corresponds to 2-253 (GAPLSTARRG…PGYRWMCLRR (252 aa)). Residue Pro-4 is glycosylated (N-linked (GlcNAc...) asparagine). The interval 70-115 (PHGGLLGWSPQAQGILTTSPPDPPPASTNRRSGRKPTPVSPPLRDT) is disordered. Polar residues predominate over residues 79–88 (PQAQGILTTS). Residues 120-174 (MQWNSTQFHQALLDPRVRGLYLPAGGSSSETQNPVPTIASLTSSIFSKTGDPAMN) are pre-S2. The helical transmembrane segment at 182–202 (LLGPLLVLQAVCFLLTKILTI) threads the bilayer. Topologically, residues 203–253 (PQSLDSWWTSLNFLGVPPGCPGQNSQSPISNHLPTSCPPTCPGYRWMCLRR) are intravirion; in external conformation. A helical membrane pass occupies residues 254–274 (FIIFLFILLLCLIFLLVLLDY). At 275–348 (QGMLPVCPLL…WASARFSWLS (74 aa)) the chain is on the virion surface side. Asn-320 carries N-linked (GlcNAc...) asparagine; by host glycosylation. The chain crosses the membrane as a helical span at residues 349–369 (LLVQFVQWCVGLSPTVWLLVI). The Intravirion segment spans residues 370–375 (WMIWYW). The chain crosses the membrane as a helical span at residues 376-398 (GPNLCSILSPFIPLLPIFCYLWA). Over 399 to 400 (SI) the chain is Virion surface.

The protein belongs to the orthohepadnavirus major surface antigen family. As to quaternary structure, in its internal form (Li-HBsAg), interacts with the capsid protein and with the isoform S. Interacts with host chaperone CANX. In terms of assembly, associates with host chaperone CANX through its pre-S2 N glycan; this association may be essential for isoform M proper secretion. Interacts with isoform L. Interacts with the antigens of satellite virus HDV (HDVAgs); this interaction is required for encapsidation of HDV genomic RNA. In terms of processing, isoform M is N-terminally acetylated by host at a ratio of 90%, and N-glycosylated by host at the pre-S2 region. Myristoylated.

The protein localises to the virion membrane. Its function is as follows. The large envelope protein exists in two topological conformations, one which is termed 'external' or Le-HBsAg and the other 'internal' or Li-HBsAg. In its external conformation the protein attaches the virus to cell receptors and thereby initiating infection. This interaction determines the species specificity and liver tropism. This attachment induces virion internalization predominantly through caveolin-mediated endocytosis. The large envelope protein also assures fusion between virion membrane and endosomal membrane. In its internal conformation the protein plays a role in virion morphogenesis and mediates the contact with the nucleocapsid like a matrix protein. The middle envelope protein plays an important role in the budding of the virion. It is involved in the induction of budding in a nucleocapsid independent way. In this process the majority of envelope proteins bud to form subviral lipoprotein particles of 22 nm of diameter that do not contain a nucleocapsid. This is Large envelope protein from Hepatitis B virus genotype H subtype adw4 (isolate Nicaragua/2928Nic/1997) (HBV-H).